The following is a 170-amino-acid chain: Co-chaperone protein HscB homolog (170 aa).

Positions 5–79 (DHFSLFGLPT…RARYLCEQAG (75 aa)) constitute a J domain.

It belongs to the HscB family. Interacts with HscA and stimulates its ATPase activity.

Functionally, co-chaperone involved in the maturation of iron-sulfur cluster-containing proteins. Seems to help targeting proteins to be folded toward HscA. In Bordetella bronchiseptica (strain ATCC BAA-588 / NCTC 13252 / RB50) (Alcaligenes bronchisepticus), this protein is Co-chaperone protein HscB homolog.